The following is a 383-amino-acid chain: Guanine nucleotide-binding protein G(s) subunit alpha (383 aa).

Residues 1–31 (MGCFGSAGSKQSDSNSSEDTKSQKRRSDAIT) are disordered. The N-palmitoyl glycine moiety is linked to residue Gly-2. A lipid anchor (S-palmitoyl cysteine) is attached at Cys-3. Over residues 8–17 (GSKQSDSNSS) the composition is skewed to polar residues. Residues 18–31 (EDTKSQKRRSDAIT) show a composition bias toward basic and acidic residues. Residues 43-383 (ATHRLLLLGA…RMHLRQYELL (341 aa)) enclose the G-alpha domain. Residues 46 to 59 (RLLLLGAGESGKST) form a G1 motif region. Residues 51–58 (GAGESGKS), 187–193 (LRCRVLT), 212–216 (DVGGQ), 281–284 (NKQD), and Ala-355 each bind GTP. Residues Ser-58 and Thr-193 each coordinate Mg(2+). Residues 185–193 (DILRCRVLT) form a G2 motif region. Residues 208-217 (FHMFDVGGQR) form a G3 motif region. The segment at 277 to 284 (ILFLNKQD) is G4 motif. A G5 motif region spans residues 353–358 (TCAVDT).

Belongs to the G-alpha family. G(s) subfamily. As to quaternary structure, g proteins are composed of 3 units; alpha, beta and gamma. The alpha chain contains the guanine nucleotide binding site.

Guanine nucleotide-binding proteins (G proteins) are involved as modulators or transducers in various transmembrane signaling systems. The G(s) protein is involved in hormonal regulation of adenylate cyclase: it activates the cyclase. Participates in olfactory signal transduction. The chain is Guanine nucleotide-binding protein G(s) subunit alpha from Anopheles gambiae (African malaria mosquito).